A 273-amino-acid chain; its full sequence is Cell division protein FtsQ (273 aa).

The Cytoplasmic portion of the chain corresponds to 1–20; that stretch reads MPPRKAHTTRRTPAKKSGVR. Residues 21-43 form a helical membrane-spanning segment; the sequence is RRLLRLLVTGVPVLALCGVAWLW. The Periplasmic portion of the chain corresponds to 44–273; sequence LESVRLTRIE…STQKSAMGHE (230 aa). The POTRA domain maps to 47–115; sequence VRLTRIEIVG…GTLRIAVEER (69 aa).

The protein belongs to the FtsQ/DivIB family. FtsQ subfamily.

The protein resides in the cell inner membrane. In terms of biological role, essential cell division protein. This Rhodothermus marinus (strain ATCC 43812 / DSM 4252 / R-10) (Rhodothermus obamensis) protein is Cell division protein FtsQ.